The sequence spans 610 residues: Zinc metalloproteinase-disintegrin-like halysase (610 aa).

Positions Met1–Ser20 are cleaved as a signal peptide. Positions Ile21–Ala182 are excised as a propeptide. The region spanning Lys199–Pro395 is the Peptidase M12B domain. An N-linked (GlcNAc...) asparagine glycan is attached at Asn218. Cystine bridges form between Cys310/Cys390, Cys350/Cys374, and Cys352/Cys357. His335 serves as a coordination point for Zn(2+). The active site involves Glu336. 2 residues coordinate Zn(2+): His339 and His345. In terms of domain architecture, Disintegrin spans Pro403–Asn488. Residues Val405, Asn408, Phe410, Glu412, Glu415, and Asp418 each coordinate Ca(2+). 14 disulfides stabilise this stretch: Cys406–Cys435, Cys417–Cys430, Cys419–Cys425, Cys429–Cys452, Cys443–Cys449, Cys448–Cys474, Cys461–Cys481, Cys468–Cys499, Cys492–Cys504, Cys511–Cys561, Cys526–Cys572, Cys539–Cys549, Cys556–Cys598, and Cys592–Cys603. A D/ECD-tripeptide motif is present at residues Glu467–Asp469.

The protein belongs to the venom metalloproteinase (M12B) family. P-III subfamily. P-IIIa sub-subfamily. In terms of assembly, monomer. It depends on Zn(2+) as a cofactor. In terms of tissue distribution, expressed by the venom gland.

The protein resides in the secreted. Inhibited by EDTA and EGTA. Not inhibited by PMSF, antipain, pepstatin, and iodoacetamide. Its function is as follows. Strongly inhibits the collagen-induced human platelet aggregation (inhibition of alpha-2/beta-1 (ITGA2/ITGB1) integrin). Hydrolyzes the Aalpha-chain of fibrinogen, without cleavage of Bbeta- and gamma-chains. Degrades type IV collagen (but not types I, II and V), fibronectin and vitronectin and also integrins alpha-1/beta-1 (ITGA1/ITGB1) and alpha-5/beta/1 (ITGA5/ITGB1) (but not alpha-V/beta-3 (ITGAV/ITGB3) and alpha-V/beta-5 (ITGAV/ITGB5) integrins). Both metalloproteinase (peptidase M12B) and disintegrin-like domains (recombinantly expressed and named halydin) play characteristic roles to inhibit human platelet aggregation. Induces apoptosis and strongly inhibits proliferation of endothelial cells as well as adhesion of the cells to extracellular matrix proteins. The apoptosis is closely associated with activation of caspase-3 and decreased level of Bcl-X(L)/Bax. Apohalysase, which lacks metalloprotease activity, is also able to induce the apoptosis. Cleaves insulin B chain at '34-His-|-Leu-35', '37-Glu-|-Ala-38', '38-Ala-|-Leu-39', '39-Leu-|-Tyr-40', '40-Tyr-|-Leu-41', '47-Gly-|-Phe-48' and '48-Phe-|-Phe-49' bonds. This chain is Zinc metalloproteinase-disintegrin-like halysase, found in Gloydius halys (Chinese water mocassin).